The sequence spans 359 residues: Quinolinate synthase (359 aa).

His81 and Ser99 together coordinate iminosuccinate. Cys144 contacts [4Fe-4S] cluster. Residues 170–172 and Ser187 each bind iminosuccinate; that span reads YVN. Residue Cys229 coordinates [4Fe-4S] cluster. Residues 255 to 257 and Thr272 contribute to the iminosuccinate site; that span reads HPE. Cys315 contacts [4Fe-4S] cluster.

This sequence belongs to the quinolinate synthase family. Type 2 subfamily. The cofactor is [4Fe-4S] cluster.

The protein localises to the cytoplasm. The enzyme catalyses iminosuccinate + dihydroxyacetone phosphate = quinolinate + phosphate + 2 H2O + H(+). The protein operates within cofactor biosynthesis; NAD(+) biosynthesis; quinolinate from iminoaspartate: step 1/1. Its function is as follows. Catalyzes the condensation of iminoaspartate with dihydroxyacetone phosphate to form quinolinate. In Sinorhizobium fredii (strain NBRC 101917 / NGR234), this protein is Quinolinate synthase.